A 248-amino-acid polypeptide reads, in one-letter code: Large ribosomal subunit protein uL30A (248 aa).

The segment at 1 to 44 (MSQKKQKIQVEQKVPENVAKKTQRDSKLRDAVAKRRTERLAANK) is disordered. The span at 8–41 (IQVEQKVPENVAKKTQRDSKLRDAVAKRRTERLA) shows a compositional bias: basic and acidic residues.

The protein belongs to the universal ribosomal protein uL30 family.

Functionally, binds to G-rich structures in 28S rRNA and in mRNAs. Plays a regulatory role in the translation apparatus; inhibits cell-free translation of mRNAs. In Paramecium tetraurelia, this protein is Large ribosomal subunit protein uL30A (Rpl7-1).